A 90-amino-acid polypeptide reads, in one-letter code: DNA-binding protein HU-alpha (90 aa).

This sequence belongs to the bacterial histone-like protein family. Heterodimer of an alpha and a beta chain.

Functionally, histone-like DNA-binding protein which is capable of wrapping DNA to stabilize it, and thus to prevent its denaturation under extreme environmental conditions. The protein is DNA-binding protein HU-alpha (hupA) of Salmonella typhi.